A 595-amino-acid polypeptide reads, in one-letter code: Putative histone-lysine N-methyltransferase PRDM6 (595 aa).

A disordered region spans residues 27–90 (FPHGGAGPLK…STPASSSTSA (64 aa)). A compositionally biased stretch (gly residues) spans 30-40 (GGAGPLKGSGA). Over residues 49–59 (PLQPPPPPPPP) the composition is skewed to pro residues. Residues 71-90 (PRPASLSSASSTPASSSTSA) show a composition bias toward low complexity. The SET domain maps to 246-365 (REVCLCTSTV…RGTELLVWYN (120 aa)). Residues 473 to 495 (WKCGQCFKTFTQRILLQMHVCTQ) form a C2H2-type 1; degenerate zinc finger. C2H2-type zinc fingers lie at residues 501–523 (YQCGHCSQSFSQPSELRNHVVTH) and 529–551 (FKCGYCGRAFAGATTLNNHIRTH). The C2H2-type 4; degenerate zinc finger occupies 557–579 (FKCERCERSFTQATQLSRHQRMP).

It belongs to the class V-like SAM-binding methyltransferase superfamily. In terms of assembly, interacts with HDAC1, HDAC2, HDAC3, CBX1 and EP300.

It is found in the nucleus. It catalyses the reaction L-lysyl(20)-[histone H4] + S-adenosyl-L-methionine = N(6)-methyl-L-lysyl(20)-[histone H4] + S-adenosyl-L-homocysteine + H(+). Its function is as follows. Putative histone methyltransferase that acts as a transcriptional repressor of smooth muscle gene expression. Promotes the transition from differentiated to proliferative smooth muscle by suppressing differentiation and maintaining the proliferative potential of vascular smooth muscle cells. Also plays a role in endothelial cells by inhibiting endothelial cell proliferation, survival and differentiation. It is unclear whether it has histone methyltransferase activity in vivo. According to some authors, it does not act as a histone methyltransferase by itself and represses transcription by recruiting EHMT2/G9a. According to others, it possesses histone methyltransferase activity when associated with other proteins and specifically methylates 'Lys-20' of histone H4 in vitro. 'Lys-20' methylation represents a specific tag for epigenetic transcriptional repression. This Homo sapiens (Human) protein is Putative histone-lysine N-methyltransferase PRDM6 (PRDM6).